We begin with the raw amino-acid sequence, 564 residues long: Eukaryotic translation initiation factor 3 subunit L (564 aa).

S2 is subject to N-acetylserine. At S21 the chain carries Phosphoserine. The region spanning 331–537 (DAIRVFANIL…IHIADTKVAR (207 aa)) is the PCI domain. An N6-acetyllysine mark is found at K465 and K549.

This sequence belongs to the eIF-3 subunit L family. In terms of assembly, component of the eukaryotic translation initiation factor 3 (eIF-3) complex, which is composed of 13 subunits: EIF3A, EIF3B, EIF3C, EIF3D, EIF3E, EIF3F, EIF3G, EIF3H, EIF3I, EIF3J, EIF3K, EIF3L and EIF3M. The eIF-3 complex appears to include 3 stable modules: module A is composed of EIF3A, EIF3B, EIF3G and EIF3I; module B is composed of EIF3F, EIF3H, and EIF3M; and module C is composed of EIF3C, EIF3D, EIF3E, EIF3K and EIF3L. EIF3C of module C binds EIF3B of module A and EIF3H of module B, thereby linking the three modules. EIF3J is a labile subunit that binds to the eIF-3 complex via EIF3B. The eIF-3 complex interacts with RPS6KB1 under conditions of nutrient depletion. Mitogenic stimulation leads to binding and activation of a complex composed of MTOR and RPTOR, leading to phosphorylation and release of RPS6KB1 and binding of EIF4B to eIF-3. Interacts with RRN3.

It localises to the cytoplasm. In terms of biological role, component of the eukaryotic translation initiation factor 3 (eIF-3) complex, which is required for several steps in the initiation of protein synthesis. The eIF-3 complex associates with the 40S ribosome and facilitates the recruitment of eIF-1, eIF-1A, eIF-2:GTP:methionyl-tRNAi and eIF-5 to form the 43S pre-initiation complex (43S PIC). The eIF-3 complex stimulates mRNA recruitment to the 43S PIC and scanning of the mRNA for AUG recognition. The eIF-3 complex is also required for disassembly and recycling of post-termination ribosomal complexes and subsequently prevents premature joining of the 40S and 60S ribosomal subunits prior to initiation. The eIF-3 complex specifically targets and initiates translation of a subset of mRNAs involved in cell proliferation, including cell cycling, differentiation and apoptosis, and uses different modes of RNA stem-loop binding to exert either translational activation or repression. This Pan troglodytes (Chimpanzee) protein is Eukaryotic translation initiation factor 3 subunit L.